The chain runs to 413 residues: Serine hydroxymethyltransferase (413 aa).

Residues Leu117 and 121-123 contribute to the (6S)-5,6,7,8-tetrahydrofolate site; that span reads GHL. The residue at position 226 (Lys226) is an N6-(pyridoxal phosphate)lysine. Residue 349-351 participates in (6S)-5,6,7,8-tetrahydrofolate binding; it reads SPF.

The protein belongs to the SHMT family. Homodimer. Pyridoxal 5'-phosphate is required as a cofactor.

It localises to the cytoplasm. It carries out the reaction (6R)-5,10-methylene-5,6,7,8-tetrahydrofolate + glycine + H2O = (6S)-5,6,7,8-tetrahydrofolate + L-serine. It functions in the pathway one-carbon metabolism; tetrahydrofolate interconversion. It participates in amino-acid biosynthesis; glycine biosynthesis; glycine from L-serine: step 1/1. In terms of biological role, catalyzes the reversible interconversion of serine and glycine with tetrahydrofolate (THF) serving as the one-carbon carrier. This reaction serves as the major source of one-carbon groups required for the biosynthesis of purines, thymidylate, methionine, and other important biomolecules. Also exhibits THF-independent aldolase activity toward beta-hydroxyamino acids, producing glycine and aldehydes, via a retro-aldol mechanism. In Listeria welshimeri serovar 6b (strain ATCC 35897 / DSM 20650 / CCUG 15529 / CIP 8149 / NCTC 11857 / SLCC 5334 / V8), this protein is Serine hydroxymethyltransferase.